The chain runs to 805 residues: MANVSKKVSWSGRDRDDEEAAPLLRRTARPGGGTPLLNGAGPGAARQSPRSALFRVGHMSSVELDDELLDPDMDPPHPFPKEIPHNEKLLSLKYESLDYDNSENQLFLEEERRINHTAFRTVEIKRWVICALIGILTGLVACFIDIVVENLAGLKYRVIKGNIDKFTEKGGLSFSLLLWATLNAAFVLVGSVIVAFIEPVAAGSGIPQIKCFLNGVKIPHVVRLKTLVIKVSGVILSVVGGLAVGKEGPMIHSGSVIAAGISQGRSTSLKRDFKIFEYFRRDTEKRDFVSAGAAAGVSAAFGAPVGGVLFSLEEGASFWNQFLTWRIFFASMISTFTLNFVLSIYHGNMWDLSSPGLINFGRFDSEKMAYTIHEIPVFIAMGVVGGVLGAVFNALNYWLTMFRIRYIHRPCLQVIEAVLVAAVTATVAFVLIYSSRDCQPLQGGSMSYPLQLFCADGEYNSMAAAFFNTPEKSVVSLFHDPPGSYNPLTLGLFTLVYFFLACWTYGLTVSAGVFIPSLLIGAAWGRLFGISLSYLTGAAIWADPGKYALMGAAAQLGGIVRMTLSLTVIMMEATSNVTYGFPIMLVLMTAKIVGDVFIEGLYDMHIQLQSVPFLHWEAPVTSHSLTAREVMSTPVTCLRRREKVGVIVDVLSDTASNHNGFPVVEHADDTQPARLQGLILRSQLIVLLKHKVFVERSNLGLVQRRLRLKDFRDAYPRFPPIQSIHVSQDERECTMDLSEFMNPSPYTVPQEASLPRVFKLFRALGLRHLVVVDNRNQVVGLVTRKDLARYRLGKRGLEELSLAQT.

The interval 1–49 (MANVSKKVSWSGRDRDDEEAAPLLRRTARPGGGTPLLNGAGPGAARQSP) is disordered. The Cytoplasmic segment spans residues 1–126 (MANVSKKVSW…TAFRTVEIKR (126 aa)). Phosphoserine is present on residues Ser9 and Ser60. The next 2 membrane-spanning stretches (helical) occupy residues 127-159 (WVIC…YRVI) and 174-197 (FSLL…VAFI). The Selectivity filter part_1 signature appears at 203-207 (GSGIP). Ser204 contacts chloride. The helical intramembrane region spans 206 to 213 (IPQIKCFL). 2 helical membrane-spanning segments follow: residues 223 to 241 (RLKT…VVGG) and 247 to 264 (EGPM…ISQG). The Selectivity filter part_2 signature appears at 245 to 249 (GKEGP). 2 intramembrane regions (helical) span residues 288 to 300 (FVSA…VSAA) and 304 to 312 (PVGGVLFSL). 5 consecutive transmembrane segments (helical) span residues 322–341 (FLTW…LNFV), 375–405 (IPVF…FRIR), 410–432 (PCLQ…FVLI), 487–507 (PLTL…TYGL), and 512–535 (GVFI…LSYL). Residues 512–516 (GVFIP) carry the Selectivity filter part_3 motif. Phe514 is a chloride binding site. Positions 545 to 559 (GKYALMGAAAQLGGI) form an intramembrane region, helical. The segment at residues 560-562 (VRM) is an intramembrane region (note=Loop between two helices). Residues 563–574 (TLSLTVIMMEAT) constitute an intramembrane region (helical). An intramembrane region (note=Loop between two helices) is located at residues 575 to 578 (SNVT). The helical transmembrane segment at 579–597 (YGFPIMLVLMTAKIVGDVF) threads the bilayer. Topologically, residues 598–805 (IEGLYDMHIQ…GLEELSLAQT (208 aa)) are cytoplasmic. Residue Tyr602 participates in chloride binding. 2 CBS domains span residues 631 to 695 (MSTP…VFVE) and 741 to 799 (MNPS…GLEE). Residues 658–660 (HNG) and 783–786 (TRKD) contribute to the ATP site. Ser801 is modified (phosphoserine).

This sequence belongs to the chloride channel (TC 2.A.49) family. ClC-7/CLCN7 subfamily. As to quaternary structure, chloride channel 7 are heteromers of alpha (CLCN7) and beta (OSTM1) subunits. In terms of tissue distribution, brain and kidney.

Its subcellular location is the lysosome membrane. It carries out the reaction 2 chloride(in) + H(+)(out) = 2 chloride(out) + H(+)(in). Its function is as follows. Slowly voltage-gated channel mediating the exchange of chloride ions against protons. Functions as antiporter and contributes to the acidification of the lysosome lumen and may be involved in maintaining lysosomal pH. The CLC channel family contains both chloride channels and proton-coupled anion transporters that exchange chloride or another anion for protons. The presence of conserved gating glutamate residues is typical for family members that function as antiporters. This chain is H(+)/Cl(-) exchange transporter 7, found in Homo sapiens (Human).